Here is a 64-residue protein sequence, read N- to C-terminus: Large ribosomal subunit protein bL33c (64 aa).

Belongs to the bacterial ribosomal protein bL33 family.

Its subcellular location is the plastid. It localises to the chloroplast. The polypeptide is Large ribosomal subunit protein bL33c (rpl33) (Mesostigma viride (Green alga)).